The sequence spans 183 residues: ATP-dependent protease subunit HslV (183 aa).

Residue Thr-12 is part of the active site. Positions 166, 169, and 172 each coordinate Na(+).

This sequence belongs to the peptidase T1B family. HslV subfamily. As to quaternary structure, a double ring-shaped homohexamer of HslV is capped on each side by a ring-shaped HslU homohexamer. The assembly of the HslU/HslV complex is dependent on binding of ATP.

Its subcellular location is the cytoplasm. The catalysed reaction is ATP-dependent cleavage of peptide bonds with broad specificity.. Allosterically activated by HslU binding. Protease subunit of a proteasome-like degradation complex believed to be a general protein degrading machinery. The chain is ATP-dependent protease subunit HslV from Afipia carboxidovorans (strain ATCC 49405 / DSM 1227 / KCTC 32145 / OM5) (Oligotropha carboxidovorans).